A 466-amino-acid chain; its full sequence is Delta-1 crystallin (466 aa).

This sequence belongs to the lyase 1 family. Argininosuccinate lyase subfamily. In terms of assembly, homotetramer. In terms of tissue distribution, eye lens.

Its function is as follows. Delta crystallin, the principal crystallin in embryonic lens, is found only in birds and reptiles. Despite possessing the necessary catalytic residues, this protein does not function as an enzymatically active argininosuccinate lyase. The sequence is that of Delta-1 crystallin (ASL1) from Anas platyrhynchos (Mallard).